We begin with the raw amino-acid sequence, 147 residues long: uncharacterized protein (147 aa).

Residues 72–81 (ARAKPASRAP) are compositionally biased toward low complexity. Residues 72-147 (ARAKPASRAP…QGAAGRRLSP (76 aa)) are disordered.

This is an uncharacterized protein from Homo sapiens (Human).